The sequence spans 343 residues: Zinc finger CCCH domain-containing protein 39 (343 aa).

The stretch at 114–147 (LSHLADAADEAAALRQENAELRVANNDLACRIAK) forms a coiled coil. 2 C3H1-type zinc fingers span residues 268-296 (MFKT…HGVA) and 306-334 (RYKT…HSIT).

This is Zinc finger CCCH domain-containing protein 39 from Oryza sativa subsp. japonica (Rice).